The following is a 530-amino-acid chain: Vesicular acetylcholine transporter (530 aa).

At 1 to 33 (MEPTAPTGQARAAATKLSEAVGAALQEPQRQRR) the chain is on the cytoplasmic side. A helical transmembrane segment spans residues 34–54 (LVLVIVCVALLLDNMLYMVIV). The Lumenal, vesicle segment spans residues 55 to 125 (PIVPDYIAHM…PTESEDVKIG (71 aa)). 2 N-linked (GlcNAc...) asparagine glycosylation sites follow: Asn-89 and Asn-96. The chain crosses the membrane as a helical span at residues 126 to 146 (VLFASKAILQLLVNPLSGPFI). Residues 147–152 (DRMSYD) are Cytoplasmic-facing. The chain crosses the membrane as a helical span at residues 153-173 (VPLLIGLGVMFASTVMFAFAE). At 174 to 182 (DYATFFAAR) the chain is on the lumenal, vesicle side. Residues 183 to 203 (SLQGLGSAFADTSGIAMIADK) traverse the membrane as a helical segment. Residues 204-213 (YPEEPERSRA) lie on the Cytoplasmic side of the membrane. The chain crosses the membrane as a helical span at residues 214-234 (LGVALAFISFGSLVAPPFGGI). Over 235-242 (LYEFAGKR) the chain is Lumenal, vesicle. The helical transmembrane segment at 243-263 (VPFLVLAAVSLFDALLLLAVA) threads the bilayer. The Cytoplasmic portion of the chain corresponds to 264 to 288 (KPFSAAARARANLPVGTPIHRLMLD). The helical transmembrane segment at 289–309 (PYIAVVAGALTTCNIPLAFLE) threads the bilayer. The Lumenal, vesicle segment spans residues 310-325 (PTIATWMKHTMAASEW). Residues 326–346 (EMGMVWLPAFVPHVLGVYLTV) form a helical membrane-spanning segment. Topologically, residues 347–356 (RLAARYPHLQ) are cytoplasmic. The helical transmembrane segment at 357–377 (WLYGALGLAVIGVSSCVVPAC) threads the bilayer. The Lumenal, vesicle segment spans residues 378-388 (RSFAPLVVSLC). Residues 389–409 (GLCFGIALVDTALLPTLAFLV) form a helical membrane-spanning segment. The Cytoplasmic segment spans residues 410 to 422 (DVRHVSVYGSVYA). Residues 423–443 (IADISYSVAYALGPIVAGHIV) form a helical membrane-spanning segment. The Lumenal, vesicle portion of the chain corresponds to 444 to 447 (HSLG). The chain crosses the membrane as a helical span at residues 448–468 (FEQLSLGMGLANLLYAPVLLL). Topologically, residues 469–530 (LRNVGLLTRS…EDDYNYYSRS (62 aa)) are cytoplasmic. Positions 471–530 (NVGLLTRSRSERDVLLDEPPQGLYDAVRLREVQGKDGGEPCSPPGPFDGCEDDYNYYSRS) are mediates interaction with SEC14L1. Residues 504 to 530 (GKDGGEPCSPPGPFDGCEDDYNYYSRS) form a disordered region.

The protein belongs to the major facilitator superfamily. Vesicular transporter family. As to quaternary structure, interacts with SEC14L1. As to expression, expressed in the spinal cord, brain (excluding the cerebellum), brain stem and cholinergic tissues. Not expressed in peripheral tissues such as liver and kidney.

It localises to the cytoplasmic vesicle. The protein resides in the secretory vesicle. Its subcellular location is the synaptic vesicle membrane. It carries out the reaction acetylcholine(out) + 2 H(+)(in) = acetylcholine(in) + 2 H(+)(out). The catalysed reaction is choline(in) + 2 H(+)(out) = choline(out) + 2 H(+)(in). The enzyme catalyses serotonin(in) + 2 H(+)(out) = serotonin(out) + 2 H(+)(in). Electrogenic antiporter that exchanges one cholinergic neurotransmitter, acetylcholine or choline, with two intravesicular protons across the membrane of synaptic vesicles. Uses the electrochemical proton gradient established by the V-type proton-pump ATPase to store neurotransmitters inside the vesicles prior to their release via exocytosis. Determines cholinergic vesicular quantal size at presynaptic nerve terminals in developing neuro-muscular junctions with an impact on motor neuron differentiation and innervation pattern. Part of forebrain cholinergic system, regulates hippocampal synapse transmissions that underlie spatial memory formation. Can transport serotonin. This Mus musculus (Mouse) protein is Vesicular acetylcholine transporter (Slc18a3).